Here is a 332-residue protein sequence, read N- to C-terminus: Fructose-1,6-bisphosphatase class 1 (332 aa).

Mg(2+) contacts are provided by glutamate 89, aspartate 110, leucine 112, and aspartate 113. Residues 113–116 (DGSS), asparagine 206, tyrosine 239, 257–259 (YLY), and lysine 269 contribute to the substrate site. Glutamate 275 contacts Mg(2+).

This sequence belongs to the FBPase class 1 family. Homotetramer. Mg(2+) serves as cofactor.

It is found in the cytoplasm. It catalyses the reaction beta-D-fructose 1,6-bisphosphate + H2O = beta-D-fructose 6-phosphate + phosphate. It participates in carbohydrate biosynthesis; gluconeogenesis. The protein is Fructose-1,6-bisphosphatase class 1 of Salmonella typhi.